The primary structure comprises 969 residues: Glycine dehydrogenase (decarboxylating) (969 aa).

Lys-716 is modified (N6-(pyridoxal phosphate)lysine).

It belongs to the GcvP family. In terms of assembly, the glycine cleavage system is composed of four proteins: P, T, L and H. Pyridoxal 5'-phosphate is required as a cofactor.

It carries out the reaction N(6)-[(R)-lipoyl]-L-lysyl-[glycine-cleavage complex H protein] + glycine + H(+) = N(6)-[(R)-S(8)-aminomethyldihydrolipoyl]-L-lysyl-[glycine-cleavage complex H protein] + CO2. Its function is as follows. The glycine cleavage system catalyzes the degradation of glycine. The P protein binds the alpha-amino group of glycine through its pyridoxal phosphate cofactor; CO(2) is released and the remaining methylamine moiety is then transferred to the lipoamide cofactor of the H protein. The chain is Glycine dehydrogenase (decarboxylating) from Shewanella woodyi (strain ATCC 51908 / MS32).